The chain runs to 469 residues: MSRYSTISLFSGAGGLDLGFVQSGRFRIVFANEILLPAAVTYSRNLGLRLEVCGDEPRVEAQPGTIMACDVAKLDFTGLSGVDADVIIGGPPCQDFSIVRGPDWDRRGINVKRGRLYAHFVRALASLQPKAFVFENVPGLVSANRGLAYKVILEDFARLSIRWDEIKRIVSSNGNGGKVEGYEIVFTGIVDFSKLGVPQKRERLVIIGLRKDLAGGGFETISRLRARIDHVLSGKRWLLHRYPLTPIEVFEGQPLDRLGDKYKEVMLKWEGVWDEVGTERAFEWKRRVWDRLTFDIISDYLSFNGIKHADKQELEEALMQHEVLLKELGYYGRPVYSLKLPDSTTEPPYEGKAVVERMKRIPPDENHEFVRGTRWEVEGRGISLVYRRIHPLKPSYTVVAYGGGGTHGYHYDRDRATLTLRERARLQTFPDSFLFYGKKPEIRAQIGEAVPPLAAKRIAEALAEVLDAV.

The SAM-dependent MTase C5-type domain maps to 4–469 (YSTISLFSGA…EALAEVLDAV (466 aa)). C93 is a catalytic residue.

This sequence belongs to the class I-like SAM-binding methyltransferase superfamily. C5-methyltransferase family.

The catalysed reaction is a 2'-deoxycytidine in DNA + S-adenosyl-L-methionine = a 5-methyl-2'-deoxycytidine in DNA + S-adenosyl-L-homocysteine + H(+). Functionally, cytosine methylase that recognizes the double-stranded sequence 5'-GC(A/T)GC-3', methylates C-5 position of the second cytosine on both strands, and protects the DNA from cleavage by the ApeKI endonuclease. This chain is DNA (cytosine-5-)-methyltransferase M.ApeKI, found in Aeropyrum pernix (strain ATCC 700893 / DSM 11879 / JCM 9820 / NBRC 100138 / K1).